Consider the following 162-residue polypeptide: SsrA-binding protein (162 aa).

Residues 140-162 are disordered; sequence DKRETAAKRDWSRQKSRLMKDHG.

This sequence belongs to the SmpB family.

Its subcellular location is the cytoplasm. Functionally, required for rescue of stalled ribosomes mediated by trans-translation. Binds to transfer-messenger RNA (tmRNA), required for stable association of tmRNA with ribosomes. tmRNA and SmpB together mimic tRNA shape, replacing the anticodon stem-loop with SmpB. tmRNA is encoded by the ssrA gene; the 2 termini fold to resemble tRNA(Ala) and it encodes a 'tag peptide', a short internal open reading frame. During trans-translation Ala-aminoacylated tmRNA acts like a tRNA, entering the A-site of stalled ribosomes, displacing the stalled mRNA. The ribosome then switches to translate the ORF on the tmRNA; the nascent peptide is terminated with the 'tag peptide' encoded by the tmRNA and targeted for degradation. The ribosome is freed to recommence translation, which seems to be the essential function of trans-translation. This Roseobacter denitrificans (strain ATCC 33942 / OCh 114) (Erythrobacter sp. (strain OCh 114)) protein is SsrA-binding protein.